Here is a 305-residue protein sequence, read N- to C-terminus: Ribosomal RNA small subunit methyltransferase H (305 aa).

Residues 30 to 32, aspartate 49, phenylalanine 74, aspartate 96, and glutamine 103 contribute to the S-adenosyl-L-methionine site; that span reads GGH.

It belongs to the methyltransferase superfamily. RsmH family.

The protein localises to the cytoplasm. It carries out the reaction cytidine(1402) in 16S rRNA + S-adenosyl-L-methionine = N(4)-methylcytidine(1402) in 16S rRNA + S-adenosyl-L-homocysteine + H(+). Functionally, specifically methylates the N4 position of cytidine in position 1402 (C1402) of 16S rRNA. This chain is Ribosomal RNA small subunit methyltransferase H, found in Francisella tularensis subsp. holarctica (strain LVS).